Here is a 505-residue protein sequence, read N- to C-terminus: Glutamate--tRNA ligase (505 aa).

The 'HIGH' region signature appears at 12–22; that stretch reads PSPTGDPHVGT. Positions 253–257 match the 'KMSKS' region motif; sequence KLSKR. Lys-256 contacts ATP.

It belongs to the class-I aminoacyl-tRNA synthetase family. Glutamate--tRNA ligase type 1 subfamily. As to quaternary structure, monomer.

It is found in the cytoplasm. It catalyses the reaction tRNA(Glu) + L-glutamate + ATP = L-glutamyl-tRNA(Glu) + AMP + diphosphate. In terms of biological role, catalyzes the attachment of glutamate to tRNA(Glu) in a two-step reaction: glutamate is first activated by ATP to form Glu-AMP and then transferred to the acceptor end of tRNA(Glu). The sequence is that of Glutamate--tRNA ligase from Chlamydia felis (strain Fe/C-56) (Chlamydophila felis).